A 119-amino-acid polypeptide reads, in one-letter code: Holo-[acyl-carrier-protein] synthase (119 aa).

Mg(2+) is bound by residues aspartate 8 and glutamate 58.

It belongs to the P-Pant transferase superfamily. AcpS family. Requires Mg(2+) as cofactor.

The protein localises to the cytoplasm. It catalyses the reaction apo-[ACP] + CoA = holo-[ACP] + adenosine 3',5'-bisphosphate + H(+). Transfers the 4'-phosphopantetheine moiety from coenzyme A to a Ser of acyl-carrier-protein. The sequence is that of Holo-[acyl-carrier-protein] synthase from Streptococcus suis (strain 05ZYH33).